The following is a 447-amino-acid chain: NADP-specific glutamate dehydrogenase (447 aa).

Residues Lys92, Gln113, and Lys116 each coordinate substrate. Catalysis depends on Lys128, which acts as the Proton donor. Gly167 contributes to the substrate binding site. NADP(+)-binding residues include Thr211 and Asn242. Position 380 (Ser380) interacts with substrate.

Belongs to the Glu/Leu/Phe/Val dehydrogenases family. Homohexamer.

The catalysed reaction is L-glutamate + NADP(+) + H2O = 2-oxoglutarate + NH4(+) + NADPH + H(+). In terms of biological role, catalyzes the reversible oxidative deamination of glutamate to alpha-ketoglutarate and ammonia. The chain is NADP-specific glutamate dehydrogenase (gdhA) from Salmonella typhimurium (strain LT2 / SGSC1412 / ATCC 700720).